We begin with the raw amino-acid sequence, 278 residues long: Glycerophosphodiester phosphodiesterase GpdQ (278 aa).

Fe cation-binding residues include D8, H10, D50, N80, H156, H195, and H197.

The protein belongs to the cyclic nucleotide phosphodiesterase class-III family. Fe(2+) is required as a cofactor.

The enzyme catalyses a sn-glycero-3-phosphodiester + H2O = an alcohol + sn-glycerol 3-phosphate + H(+). It carries out the reaction sn-glycero-3-phosphoethanolamine + H2O = ethanolamine + sn-glycerol 3-phosphate + H(+). Its function is as follows. Catalyzes the hydrolysis of the 3'-5' phosphodiester bond of glycerophosphodiesters such as glycerophosphorylethanolamine (GPE), a typical phospholipid metabolite. In Enterobacter lignolyticus (strain SCF1), this protein is Glycerophosphodiester phosphodiesterase GpdQ.